Reading from the N-terminus, the 86-residue chain is MDEQHYVYILRCRDQSLYTGYTNNLEHRLQMHETGKGAKYTRGRGPFEVLYVKKFINKSEAMQEEYRIKQLPRFEKLKLIEFQEQE.

A GIY-YIG domain is found at 3 to 80 (EQHYVYILRC…LPRFEKLKLI (78 aa)).

Belongs to the UPF0213 family.

The protein is UPF0213 protein OB0043 of Oceanobacillus iheyensis (strain DSM 14371 / CIP 107618 / JCM 11309 / KCTC 3954 / HTE831).